Consider the following 179-residue polypeptide: Large ribosomal subunit protein uL6 (179 aa).

The protein belongs to the universal ribosomal protein uL6 family. As to quaternary structure, part of the 50S ribosomal subunit.

Its function is as follows. This protein binds to the 23S rRNA, and is important in its secondary structure. It is located near the subunit interface in the base of the L7/L12 stalk, and near the tRNA binding site of the peptidyltransferase center. This is Large ribosomal subunit protein uL6 from Chlorobium limicola (strain DSM 245 / NBRC 103803 / 6330).